A 180-amino-acid polypeptide reads, in one-letter code: UPF0227 protein KPN78578_10770 (180 aa).

This sequence belongs to the UPF0227 family.

In Klebsiella pneumoniae subsp. pneumoniae (strain ATCC 700721 / MGH 78578), this protein is UPF0227 protein KPN78578_10770.